Reading from the N-terminus, the 528-residue chain is FAD-dependent monooxygenase DEP2 (528 aa).

An N-terminal signal peptide occupies residues 1 to 23; sequence MEDGRSTFKVIIIGAGVTGLTLA. FAD contacts are provided by D37, R110, D311, and G324. The chain crosses the membrane as a helical span at residues 479–499; the sequence is VFPQILGVLMVMWSSVWLFHL. N521 is a glycosylation site (N-linked (GlcNAc...) asparagine).

It belongs to the paxM FAD-dependent monooxygenase family. FAD serves as cofactor.

It localises to the membrane. The protein operates within polyketide biosynthesis. In terms of biological role, FAD-dependent monooxygenase; part of the gene cluster that mediates the biosynthesis of depudecin, a highly oxidized eleven-carbon linear polyketide that acts as a histone deacetylase (HDAC) inhibitor and makes a small contribution to pathogenesis. The reducing polyketide synthase DEP5 is the central enzyme in depudecin biosynthesis by yielding the backbone polyketide chain. The monooxygenases DEP2 and DEP4, as well as the uncharacterized protein DEP1, then act as tailoring enzymes to modify the intermediate polyketide chain into depudecin. This chain is FAD-dependent monooxygenase DEP2, found in Alternaria brassicicola (Dark leaf spot agent).